The following is a 368-amino-acid chain: uncharacterized protein (368 aa).

Functionally, might be involved in sporulation. This is an uncharacterized protein from Brachyspira hyodysenteriae (strain ATCC 49526 / WA1).